Here is a 1256-residue protein sequence, read N- to C-terminus: Octopamine receptor beta-3R (1256 aa).

The Extracellular segment spans residues 1–143; the sequence is MSGVNVADLL…LDLSLLLLKG (143 aa). N-linked (GlcNAc...) asparagine glycans are attached at residues asparagine 36, asparagine 113, and asparagine 117. The helical transmembrane segment at 144–164 threads the bilayer; that stretch reads FIFSSIILAAVLGNALVIISV. Residues 165–171 lie on the Cytoplasmic side of the membrane; the sequence is QRNRKLR. A helical transmembrane segment spans residues 172 to 192; sequence VITNYFVVSLAMADMLVALCA. At 193–213 the chain is on the extracellular side; it reads MTFNASVELSGGKWMFGPFMC. Asparagine 196 is a glycosylation site (N-linked (GlcNAc...) asparagine). The chain crosses the membrane as a helical span at residues 214-236; that stretch reads NVYNSLDVYFSTASILHLCCISV. The Cytoplasmic portion of the chain corresponds to 237 to 258; sequence DRYYAIVRPLEYPLNMTHKTVC. A helical transmembrane segment spans residues 259–279; it reads FMLANVWILPALISFTPIFLG. Residues 280 to 305 lie on the Extracellular side of the membrane; the sequence is WYTTEEHLREISLHPDQCSFVVNKAY. Residues 306 to 326 form a helical membrane-spanning segment; sequence ALISSSVSFWIPGIVMLVMYW. Residues 327–1169 are Cytoplasmic-facing; it reads RIFKEAIRQR…WKAEHKAART (843 aa). 5 disordered regions span residues 377 to 427, 480 to 512, 665 to 698, 751 to 774, and 1087 to 1117; these read AREE…DLRD, ELDK…ESTA, LSHS…NKPD, GESP…EPSG, and DTTV…SSTR. Residues 396–406 are compositionally biased toward acidic residues; it reads TDEDDDRDECD. Positions 489 to 498 are enriched in polar residues; the sequence is NGPQQQLSLT. Over residues 757 to 770 the composition is skewed to pro residues; that stretch reads PATPPPSLSPPELP. The helical transmembrane segment at 1170–1190 threads the bilayer; the sequence is LGIIMGVFLLCWLPFFLWYVI. The Extracellular segment spans residues 1191 to 1202; the sequence is TSLCGPACPCPD. A helical transmembrane segment spans residues 1203–1223; the sequence is VLVVVLFWIGYFNSTLNPLIY. The Cytoplasmic segment spans residues 1224 to 1256; it reads AYFNRDFREAFRNTLECVLPCLEKRNPYNAYYV.

The protein belongs to the G-protein coupled receptor 1 family. In the adult, expressed in the inferior and superior protocerebrum, the posterior lateral protocerebrum, the deutocerebrum, the surface of the subesophageal ganglion, the lateral cell body region, the cortical layer of the ventral nerve cord and the optic lobe medulla of the central nervous system (CNS). Also expressed in the nurse cells and follicle cells of the egg chambers in the ovary at oogenic stages 1-10, and spermatogonia and spermatocytes in the testis. Expressed ubiquitously in the embryonic CNS. In larvae, expressed in the ventral cortical layer of the ventral nerve cord, the cortical layer of the brain lobes, salivary glands, midgut, imaginal disks and developing reproductive organs. Expressed in the larval prothoracic gland with weak expression in other regions of the ring gland.

It localises to the cell membrane. Its function is as follows. Autoreceptor for octopamine, which is a neurotransmitter, neurohormone, and neuromodulator in invertebrates. Probably also acts as a receptor for tyramine during ecdysone biosynthesis. Required for the biosynthesis of the steroid hormone ecdysone which is necessary for metamorphosis. Involved in activation of prothoracicotropic hormone and insulin-like peptide signaling which is required for the expression of ecdysone biosynthetic genes. The chain is Octopamine receptor beta-3R from Drosophila melanogaster (Fruit fly).